The following is a 145-amino-acid chain: Deoxyuridine 5'-triphosphate nucleotidohydrolase (145 aa).

Residues 63–65 (RSG), Gln-76, and 80–82 (TVD) each bind substrate.

This sequence belongs to the dUTPase family. The cofactor is Mg(2+).

The enzyme catalyses dUTP + H2O = dUMP + diphosphate + H(+). The protein operates within pyrimidine metabolism; dUMP biosynthesis; dUMP from dCTP (dUTP route): step 2/2. Functionally, this enzyme is involved in nucleotide metabolism: it produces dUMP, the immediate precursor of thymidine nucleotides and it decreases the intracellular concentration of dUTP so that uracil cannot be incorporated into DNA. The protein is Deoxyuridine 5'-triphosphate nucleotidohydrolase of Chlamydia trachomatis serovar L2 (strain ATCC VR-902B / DSM 19102 / 434/Bu).